Consider the following 766-residue polypeptide: LPS-assembly protein LptD (766 aa).

The signal sequence occupies residues 1–18 (MQIRYFLALSLLPNIVLA).

It belongs to the LptD family. As to quaternary structure, component of the lipopolysaccharide transport and assembly complex. Interacts with LptE and LptA.

The protein resides in the cell outer membrane. Functionally, together with LptE, is involved in the assembly of lipopolysaccharide (LPS) at the surface of the outer membrane. The sequence is that of LPS-assembly protein LptD from Shewanella frigidimarina (strain NCIMB 400).